We begin with the raw amino-acid sequence, 553 residues long: Phospholipase-B 81 (553 aa).

A signal peptide spans 1–35 (MVRFGSAASSDNRRRRCWSWYWGGLLLLWAVAETR). N-linked (GlcNAc...) asparagine glycosylation is found at Asn69, Asn313, Asn416, and Asn531.

The protein belongs to the phospholipase B-like family. In terms of tissue distribution, expressed by the venom gland.

The protein resides in the secreted. Its function is as follows. May cause hemolysis. This is Phospholipase-B 81 from Drysdalia coronoides (White-lipped snake).